The chain runs to 241 residues: Chloride intracellular channel protein 1 (241 aa).

Alanine 2 is subject to N-acetylalanine. The tract at residues 2 to 90 is required for insertion into the membrane; sequence AEEQPQVELF…EEFLEAVLCP (89 aa). Lysine 13 bears the N6-acetyllysine mark. The G-site motif lies at 24–27; the sequence is CPFS. A disulfide bridge connects residues cysteine 24 and cysteine 59. The chain crosses the membrane as a helical span at residues 26-46; sequence FSQRLFMVLWLKGVTFNVTTV. Positions 93–233 constitute a GST C-terminal domain; that stretch reads YPKLAALNPE…PDDEEIELAY (141 aa). Residue lysine 119 is modified to N6-acetyllysine. Serine 121 is modified (phosphoserine). The residue at position 131 (lysine 131) is an N6-acetyllysine. Residues serine 156 and serine 211 each carry the phosphoserine modification. Residue tyrosine 233 is modified to Phosphotyrosine.

Belongs to the chloride channel CLIC family. In terms of assembly, monomer. Homodimer (in vitro). Interacts with TRAPPC2. Dimerization requires a conformation change that leads to the exposure of a large hydrophobic surface. In vivo, this may lead to membrane insertion. In terms of tissue distribution, expressed in neonatal and adult cardiomyocytes (at protein level).

It localises to the nucleus. The protein resides in the nucleus membrane. Its subcellular location is the cytoplasm. It is found in the cell membrane. The protein localises to the endoplasmic reticulum. It carries out the reaction L-dehydroascorbate + 2 glutathione = glutathione disulfide + L-ascorbate. The catalysed reaction is chloride(in) = chloride(out). It catalyses the reaction iodide(out) = iodide(in). The enzyme catalyses thiocyanate(in) = thiocyanate(out). It carries out the reaction nitrate(in) = nitrate(out). The catalysed reaction is bromide(in) = bromide(out). It catalyses the reaction fluoride(in) = fluoride(out). Its function is as follows. In the soluble state, catalyzes glutaredoxin-like thiol disulfide exchange reactions with reduced glutathione as electron donor. Reduces selenite and dehydroascorbate and may act as an antioxidant during oxidative stress response. Can insert into membranes and form voltage-dependent multi-ion conductive channels. Membrane insertion seems to be redox-regulated and may occur only under oxidizing conditions. Involved in regulation of the cell cycle. The chain is Chloride intracellular channel protein 1 from Rattus norvegicus (Rat).